The following is a 299-amino-acid chain: Probable lipid kinase YegS-like (299 aa).

The DAGKc domain maps to 2–133 (ATFPASLLIL…IDIAQVNDKT (132 aa)). ATP contacts are provided by residues threonine 40, 66-72 (GDGTINE), and threonine 95. The Mg(2+) site is built by leucine 215, aspartate 218, and leucine 220. Glutamate 271 acts as the Proton acceptor in catalysis.

It belongs to the diacylglycerol/lipid kinase family. YegS lipid kinase subfamily. Mg(2+) is required as a cofactor. It depends on Ca(2+) as a cofactor.

The protein resides in the cytoplasm. Its function is as follows. Probably phosphorylates lipids; the in vivo substrate is unknown. This is Probable lipid kinase YegS-like from Citrobacter koseri (strain ATCC BAA-895 / CDC 4225-83 / SGSC4696).